The primary structure comprises 404 residues: POU domain, class 2, transcription factor 3L (404 aa).

Disordered regions lie at residues 1–29 and 44–67; these read MNRE…TLDF and TGIP…MTGE. The segment covering 16-29 has biased composition (basic and acidic residues); that stretch reads GHLENDAERDTLDF. One can recognise a POU-specific domain in the interval 187–235; it reads QGDVGLAMGKLYGNDFSQTTISRFEALNLSFKNMCKLKPLLEKWLNDAE. Residues 259–297 constitute a DNA-binding region (homeobox); it reads KRKKRTSIETNIRLTLEKRFQDNPKPSSEEISMIAEQLV. The segment at 346 to 367 is disordered; that stretch reads MTVTSSCSPGNSSRPSSPTCGL. Residues 350 to 363 show a composition bias toward low complexity; that stretch reads SSCSPGNSSRPSSP.

It belongs to the POU transcription factor family. Class-2 subfamily.

Its subcellular location is the nucleus. Its function is as follows. Transcription factor that binds to the octamer motif (5'-ATTTGCAT-3') and regulates cell type-specific differentiation pathways. In Xenopus laevis (African clawed frog), this protein is POU domain, class 2, transcription factor 3L (pou2f3.L).